Here is a 502-residue protein sequence, read N- to C-terminus: Glycerate kinase (502 aa).

This sequence belongs to the glycerate kinase type-2 family.

The protein localises to the cytoplasm. The catalysed reaction is (R)-glycerate + ATP = (2R)-3-phosphoglycerate + ADP + H(+). The chain is Glycerate kinase (glyctk) from Danio rerio (Zebrafish).